The chain runs to 367 residues: Glutamate 5-kinase (367 aa).

Position 10 (Lys-10) interacts with ATP. Ser-50, Asp-137, and Asn-149 together coordinate substrate. Residues 169–170 and 211–217 each bind ATP; these read TD and TGGMATK. Positions 275 to 353 constitute a PUA domain; the sequence is AGELVVDDGA…QQIGEILGYE (79 aa).

The protein belongs to the glutamate 5-kinase family.

Its subcellular location is the cytoplasm. It catalyses the reaction L-glutamate + ATP = L-glutamyl 5-phosphate + ADP. It functions in the pathway amino-acid biosynthesis; L-proline biosynthesis; L-glutamate 5-semialdehyde from L-glutamate: step 1/2. Catalyzes the transfer of a phosphate group to glutamate to form L-glutamate 5-phosphate. This Erwinia tasmaniensis (strain DSM 17950 / CFBP 7177 / CIP 109463 / NCPPB 4357 / Et1/99) protein is Glutamate 5-kinase.